The sequence spans 137 residues: Large ribosomal subunit protein uL16 (137 aa).

Belongs to the universal ribosomal protein uL16 family. Part of the 50S ribosomal subunit.

Binds 23S rRNA and is also seen to make contacts with the A and possibly P site tRNAs. This is Large ribosomal subunit protein uL16 from Psychrobacter sp. (strain PRwf-1).